Reading from the N-terminus, the 493-residue chain is Cobyric acid synthase (493 aa).

Residues R260 to A427 form the GATase cobBQ-type domain. H419 is an active-site residue.

This sequence belongs to the CobB/CobQ family. CobQ subfamily.

It functions in the pathway cofactor biosynthesis; adenosylcobalamin biosynthesis. Functionally, catalyzes amidations at positions B, D, E, and G on adenosylcobyrinic A,C-diamide. NH(2) groups are provided by glutamine, and one molecule of ATP is hydrogenolyzed for each amidation. In Corynebacterium efficiens (strain DSM 44549 / YS-314 / AJ 12310 / JCM 11189 / NBRC 100395), this protein is Cobyric acid synthase.